A 209-amino-acid polypeptide reads, in one-letter code: Ribosomal RNA large subunit methyltransferase E (209 aa).

Positions 63, 65, 83, 99, and 124 each coordinate S-adenosyl-L-methionine. Catalysis depends on Lys164, which acts as the Proton acceptor.

The protein belongs to the class I-like SAM-binding methyltransferase superfamily. RNA methyltransferase RlmE family.

Its subcellular location is the cytoplasm. It catalyses the reaction uridine(2552) in 23S rRNA + S-adenosyl-L-methionine = 2'-O-methyluridine(2552) in 23S rRNA + S-adenosyl-L-homocysteine + H(+). In terms of biological role, specifically methylates the uridine in position 2552 of 23S rRNA at the 2'-O position of the ribose in the fully assembled 50S ribosomal subunit. The polypeptide is Ribosomal RNA large subunit methyltransferase E (Aliivibrio salmonicida (strain LFI1238) (Vibrio salmonicida (strain LFI1238))).